We begin with the raw amino-acid sequence, 487 residues long: Cobyric acid synthase (487 aa).

Residues 248-435 enclose the GATase cobBQ-type domain; the sequence is VLKVIVPVLP…LHGLFEGSQS (188 aa). Cysteine 329 acts as the Nucleophile in catalysis. Histidine 427 is an active-site residue.

It belongs to the CobB/CobQ family. CobQ subfamily.

It functions in the pathway cofactor biosynthesis; adenosylcobalamin biosynthesis. Functionally, catalyzes amidations at positions B, D, E, and G on adenosylcobyrinic A,C-diamide. NH(2) groups are provided by glutamine, and one molecule of ATP is hydrogenolyzed for each amidation. The polypeptide is Cobyric acid synthase (Pseudomonas entomophila (strain L48)).